The sequence spans 843 residues: MSYMPAQNRTMSHNNQYNPPDLPPMVSAKEQTLMWQQNSYLGDSGIHSGAVTQVPSLSGKEDEEMEGDPLMFDLDTGFPQNFTQDQVDDMNQQLSQTRSQRVRAAMFPETLEEGIEIPSTQFDPQQPTAVQRLSEPSQMLKHAVVNLINYQDDAELATRAIPELIKLLNDEDQVVVSQAAMMVHQLSKKEASRHAIMNSPQMVAALVRAISNSNDLESTKAAVGTLHNLSHHRQGLLAIFKSGGIPALVKLLSSPVESVLFYAITTLHNLLLHQDGSKMAVRLAGGLQKMVTLLQRNNVKFLAIVTDCLQILAYGNQESKLIILASGGPNELVRIMRSYDYEKLLWTTSRVLKVLSVCSSNKPAIVDAGGMQALAMHLGNMSPRLVQNCLWTLRNLSDAATKVEGLEALLQSLVQVLGSTDVNVVTCAAGILSNLTCNNQRNKATVCQVGGVDALVRTIINAGDREEITEPAVCALRHLTSRHVDSELAQNAVRLNYGLSVIVKLLHPPSRWPLIKAVIGLIRNLALCPANHAPLREHGAIHHLVRLLMRAFQDTERQRSSIATTGSQQPSAYADGVRMEEIVEGTVGALHILARESHNRALIRQQSVIPIFVRLLFNEIENIQRVAAGVLCELAADKEGAEIIEQEGATGPLTDLLHSRNEGVATYAAAVLFRMSEDKPQDYKKRLSIELTNSLLREDNNIWANADLGMGPDLQDMLGPEEAYEGLYGQGPPSVHSSHGGRAFHQQGYDTLPIDSMQGLEISSPVGGGGAGGAPGNGGAVGGASGGGGNIGAIPPSGAPTSPYSMDMDVGEIDAGALNFDLDAMPTPPNDNNNLAAWYDTDC.

ARM repeat units follow at residues 159 to 200 (RAIP…MNSP), 201 to 242 (QMVA…IFKS), 243 to 284 (GGIP…VRLA), 285 to 326 (GGLQ…ILAS), 327 to 368 (GGPN…IVDA), 369 to 410 (GGMQ…EALL), 411 to 449 (QSLV…VCQV), 450 to 496 (GGVD…VRLN), 497 to 538 (YGLS…LREH), 539 to 584 (GAIH…EIVE), 585 to 608 (GTVG…QQSV), and 609 to 647 (IPIF…IEQE). The ARM 13; truncated repeat unit spans residues 648–689 (GATGPLTDLLHSRNEGVATYAAAVLFRMSEDKPQDYKKRLSI). Threonine 650 bears the Phosphothreonine mark. Phosphoserine is present on residues serine 688 and serine 694.

Belongs to the beta-catenin family. Interacts with Mer and Moe at the adherens junction. Interacts with Inx2. Interacts with alpha-Cat. Interacts with Myo31DF. In terms of processing, phosphorylated on Ser, Thr and Tyr residues. Level of phosphorylation varies both during embryonic development and from embryonic tissue to tissue. Sgg is required for phosphorylation and wg signal negatively regulates arm phosphorylation. Hypophosphorylated form of arm increases in steady-state levels. Phosphorylated directly or indirectly by CkIalpha which stimulates its degradation. In terms of tissue distribution, isoform cytoplasmic accumulates at low levels in axons, at high levels in specific cells along the CNS midline and in leg and eye imaginal disks. Isoform neural accumulates in the axon tracts of the CNS. Both isoforms accumulate in the peripheral nervous system.

It is found in the cytoplasm. Its subcellular location is the cell membrane. The protein localises to the cell junction. The protein resides in the adherens junction. Its function is as follows. Isoform neural may associate with CadN and participate in the transmission of developmental information. Can associate with alpha-catenin. Isoform cytoplasmic accumulates through wg signaling; arm function in wg signal transduction is required early in development for determination of neuroblast fate. Arm and Abl proteins function cooperatively at adherens junctions in both the CNS and epidermis. The sequence is that of Armadillo segment polarity protein (arm) from Drosophila melanogaster (Fruit fly).